The following is a 166-amino-acid chain: uncharacterized protein (166 aa).

This is an uncharacterized protein from Schizosaccharomyces pombe (strain 972 / ATCC 24843) (Fission yeast).